The following is a 284-amino-acid chain: MAEITAKMVADLRAATGLGMMECKKALVEAEGNFDKAEEILRIKSGAKAGKLAGRTAAEGVLAYAINGNVGALVEVNCETDFVAKDAGFVEFANFVAKTAAEKKPASVEELSELVEAERKAIIAKLGENMSVRRFQVIDTANQLVAYIHGALATEGVLVEYKGSEDVARKIGMHIVAAKPQCVSEAEVDAETVEKERHIYTEQAIASGKPADIAAKMVEGRIRKFLAEITLNGQAFVMNPDQTVAQFAKENGTEVVSFVRYKVGDGIEKAVVDYAAEVAAAAKV.

Residues 80-83 are involved in Mg(2+) ion dislocation from EF-Tu; the sequence is TDFV.

This sequence belongs to the EF-Ts family.

The protein localises to the cytoplasm. In terms of biological role, associates with the EF-Tu.GDP complex and induces the exchange of GDP to GTP. It remains bound to the aminoacyl-tRNA.EF-Tu.GTP complex up to the GTP hydrolysis stage on the ribosome. This Neisseria meningitidis serogroup C (strain 053442) protein is Elongation factor Ts.